A 309-amino-acid polypeptide reads, in one-letter code: Aspartate carbamoyltransferase catalytic subunit (309 aa).

2 residues coordinate carbamoyl phosphate: Arg-58 and Thr-59. L-aspartate is bound at residue Lys-86. Carbamoyl phosphate is bound by residues Arg-108, His-136, and Gln-139. Positions 170 and 224 each coordinate L-aspartate. 2 residues coordinate carbamoyl phosphate: Gly-266 and Pro-267.

It belongs to the aspartate/ornithine carbamoyltransferase superfamily. ATCase family. In terms of assembly, heterododecamer (2C3:3R2) of six catalytic PyrB chains organized as two trimers (C3), and six regulatory PyrI chains organized as three dimers (R2).

The enzyme catalyses carbamoyl phosphate + L-aspartate = N-carbamoyl-L-aspartate + phosphate + H(+). The protein operates within pyrimidine metabolism; UMP biosynthesis via de novo pathway; (S)-dihydroorotate from bicarbonate: step 2/3. Catalyzes the condensation of carbamoyl phosphate and aspartate to form carbamoyl aspartate and inorganic phosphate, the committed step in the de novo pyrimidine nucleotide biosynthesis pathway. The chain is Aspartate carbamoyltransferase catalytic subunit from Campylobacter curvus (strain 525.92).